Here is a 296-residue protein sequence, read N- to C-terminus: D-alanine--D-alanine ligase (296 aa).

The ATP-grasp domain occupies 103–293; the sequence is KEILMHHRMP…FDSFVKRIIE (191 aa). Residue 129–180 coordinates ATP; that stretch reads ISFPVAVKPSSGGSSIATFKVKSIQELKHAYEEASKYGEVMIEQWVTGKEIT. Mg(2+) contacts are provided by aspartate 247, glutamate 260, and asparagine 262.

The protein belongs to the D-alanine--D-alanine ligase family. Mg(2+) is required as a cofactor. Requires Mn(2+) as cofactor.

The protein localises to the cytoplasm. The catalysed reaction is 2 D-alanine + ATP = D-alanyl-D-alanine + ADP + phosphate + H(+). It functions in the pathway cell wall biogenesis; peptidoglycan biosynthesis. In terms of biological role, cell wall formation. This Francisella tularensis subsp. novicida (strain U112) protein is D-alanine--D-alanine ligase.